A 304-amino-acid polypeptide reads, in one-letter code: tRNA pseudouridine synthase B (304 aa).

The Nucleophile role is filled by aspartate 38.

The protein belongs to the pseudouridine synthase TruB family. Type 1 subfamily.

It carries out the reaction uridine(55) in tRNA = pseudouridine(55) in tRNA. Responsible for synthesis of pseudouridine from uracil-55 in the psi GC loop of transfer RNAs. This Listeria monocytogenes serotype 4b (strain F2365) protein is tRNA pseudouridine synthase B.